Reading from the N-terminus, the 363-residue chain is GDSL esterase/lipase At3g14220 (363 aa).

The first 28 residues, 1–28 (MAKNRNLVFFLGVLASFTLSSFPVTVSG), serve as a signal peptide directing secretion. Residue serine 39 is the Nucleophile of the active site. Residues aspartate 318 and histidine 321 contribute to the active site.

Belongs to the 'GDSL' lipolytic enzyme family.

The protein localises to the secreted. This Arabidopsis thaliana (Mouse-ear cress) protein is GDSL esterase/lipase At3g14220.